The sequence spans 509 residues: ESX-2 secretion system protein eccD2 (509 aa).

The next 11 membrane-spanning stretches (helical) occupy residues 135 to 155 (LTAAHTAMAIIAMAVGVVLAL), 170 to 190 (AMAGGIGVLLVIGALVVWWGW), 196 to 216 (LFSGFGWLAVVLLAVAAACAP), 222 to 242 (AAHALIGLVVVVLGAITIGVA), 248 to 268 (QTAVVTAVVTVCGILAAVAAV), 281 to 301 (ICVLVGLLVLIRMTPTVALWV), 364 to 384 (VQVGMCVGVSLVLPAAVWGVL), 389 to 409 (PWAWLALLVAGLTVGLFITQG), 418 to 438 (AVALVCGASAAVCAGVLKYAL), 449 to 469 (LWPAIFVAAFAALGLAVALVV), and 487 to 507 (VLAMIALLPAAAALGGLFAWL).

This sequence belongs to the EccD/Snm4 family. As to quaternary structure, part of the ESX-2 / type VII secretion system (T7SS), which is composed of cytosolic and membrane components.

Its subcellular location is the cell membrane. This chain is ESX-2 secretion system protein eccD2 (eccD2), found in Mycobacterium tuberculosis (strain CDC 1551 / Oshkosh).